Consider the following 190-residue polypeptide: Holliday junction branch migration complex subunit RuvA (190 aa).

Residues 1 to 64 (MIGSLTGIIE…DNLTQLYGFL (64 aa)) are domain I. The segment at 65–142 (DKQEQDYMRM…KMPIEETLII (78 aa)) is domain II. A region of interest (flexible linker) is located at residue Lys-143. Positions 143-190 (KEDDSLAALISLGYDKLKAFNAIQEIKANFPDDSIQEIIRKALQKLSQ) are domain III.

Belongs to the RuvA family. Homotetramer. Forms an RuvA(8)-RuvB(12)-Holliday junction (HJ) complex. HJ DNA is sandwiched between 2 RuvA tetramers; dsDNA enters through RuvA and exits via RuvB. An RuvB hexamer assembles on each DNA strand where it exits the tetramer. Each RuvB hexamer is contacted by two RuvA subunits (via domain III) on 2 adjacent RuvB subunits; this complex drives branch migration. In the full resolvosome a probable DNA-RuvA(4)-RuvB(12)-RuvC(2) complex forms which resolves the HJ.

The protein localises to the cytoplasm. In terms of biological role, the RuvA-RuvB-RuvC complex processes Holliday junction (HJ) DNA during genetic recombination and DNA repair, while the RuvA-RuvB complex plays an important role in the rescue of blocked DNA replication forks via replication fork reversal (RFR). RuvA specifically binds to HJ cruciform DNA, conferring on it an open structure. The RuvB hexamer acts as an ATP-dependent pump, pulling dsDNA into and through the RuvAB complex. HJ branch migration allows RuvC to scan DNA until it finds its consensus sequence, where it cleaves and resolves the cruciform DNA. The chain is Holliday junction branch migration complex subunit RuvA from Ehrlichia chaffeensis (strain ATCC CRL-10679 / Arkansas).